The following is a 497-amino-acid chain: Glutamyl-tRNA(Gln) amidotransferase subunit A (497 aa).

Residues lysine 91 and serine 166 each act as charge relay system in the active site. The tract at residues 143–171 (SSTENSAYGPTHNPWDLERTAGGSGGGSS) is disordered. Residue serine 190 is the Acyl-ester intermediate of the active site.

Belongs to the amidase family. GatA subfamily. In terms of assembly, heterotrimer of A, B and C subunits.

It catalyses the reaction L-glutamyl-tRNA(Gln) + L-glutamine + ATP + H2O = L-glutaminyl-tRNA(Gln) + L-glutamate + ADP + phosphate + H(+). In terms of biological role, allows the formation of correctly charged Gln-tRNA(Gln) through the transamidation of misacylated Glu-tRNA(Gln) in organisms which lack glutaminyl-tRNA synthetase. The reaction takes place in the presence of glutamine and ATP through an activated gamma-phospho-Glu-tRNA(Gln). The protein is Glutamyl-tRNA(Gln) amidotransferase subunit A of Corynebacterium glutamicum (strain R).